We begin with the raw amino-acid sequence, 399 residues long: Elongation factor Tu (399 aa).

A tr-type G domain is found at 10–209; sequence KPHVNIGTIG…AVDEYIPTPE (200 aa). Positions 19–26 are G1; that stretch reads GHVDHGKT. A GTP-binding site is contributed by 19–26; the sequence is GHVDHGKT. Thr26 provides a ligand contact to Mg(2+). The segment at 60–64 is G2; the sequence is GITIN. The G3 stretch occupies residues 81–84; sequence DCPG. GTP-binding positions include 81 to 85 and 136 to 139; these read DCPGH and NKMD. The interval 136-139 is G4; the sequence is NKMD. Positions 174–176 are G5; the sequence is SAL.

This sequence belongs to the TRAFAC class translation factor GTPase superfamily. Classic translation factor GTPase family. EF-Tu/EF-1A subfamily. In terms of assembly, monomer.

It localises to the cytoplasm. It catalyses the reaction GTP + H2O = GDP + phosphate + H(+). In terms of biological role, GTP hydrolase that promotes the GTP-dependent binding of aminoacyl-tRNA to the A-site of ribosomes during protein biosynthesis. The polypeptide is Elongation factor Tu (Nautilia profundicola (strain ATCC BAA-1463 / DSM 18972 / AmH)).